We begin with the raw amino-acid sequence, 298 residues long: Probable pyridoxal 5'-phosphate synthase subunit SNZ2 (298 aa).

Residue Asp-21 coordinates D-ribose 5-phosphate. Catalysis depends on Lys-78, which acts as the Schiff-base intermediate with D-ribose 5-phosphate. Residues Gly-150, Gly-213, and 234–235 (GS) each bind D-ribose 5-phosphate.

It belongs to the PdxS/SNZ family. As to quaternary structure, homohexamer. Interacts with THI11.

The catalysed reaction is aldehydo-D-ribose 5-phosphate + D-glyceraldehyde 3-phosphate + L-glutamine = pyridoxal 5'-phosphate + L-glutamate + phosphate + 3 H2O + H(+). It participates in cofactor biosynthesis; pyridoxal 5'-phosphate biosynthesis. Its function is as follows. Catalyzes the formation of pyridoxal 5'-phosphate from ribose 5-phosphate (RBP), glyceraldehyde 3-phosphate (G3P) and ammonia. The ammonia is provided by a SNO isoform. Can also use ribulose 5-phosphate and dihydroxyacetone phosphate as substrates, resulting from enzyme-catalyzed isomerization of RBP and G3P, respectively. The protein is Probable pyridoxal 5'-phosphate synthase subunit SNZ2 (SNZ2) of Saccharomyces cerevisiae (strain ATCC 204508 / S288c) (Baker's yeast).